Reading from the N-terminus, the 410-residue chain is Neuroserpin (410 aa).

Positions 1 to 16 (MTYLELLALLALQSVV) are cleaved as a signal peptide. Asparagine 157, asparagine 321, and asparagine 401 each carry an N-linked (GlcNAc...) asparagine glycan. Residue serine 403 is glycosylated (O-linked (Xyl...) (chondroitin sulfate) serine).

Belongs to the serpin family. Detected in neurons in embryonic brain cortex (at protein level). During embryonic development mostly expressed in CNS. In adult expressed in brain and much less in spinal cord, heart, kidney and testis.

Its subcellular location is the secreted. It is found in the cytoplasmic vesicle. The protein localises to the secretory vesicle lumen. The protein resides in the perikaryon. In terms of biological role, serine protease inhibitor that inhibits plasminogen activators and plasmin but not thrombin. May be involved in the formation or reorganization of synaptic connections as well as for synaptic plasticity in the adult nervous system. May protect neurons from cell damage by tissue-type plasminogen activator. The protein is Neuroserpin (Serpini1) of Mus musculus (Mouse).